Reading from the N-terminus, the 332-residue chain is Adenosine receptor A2b (332 aa).

At methionine 1–alanine 8 the chain is on the extracellular side. The helical transmembrane segment at leucine 9–glycine 33 threads the bilayer. Topologically, residues alanine 34–asparagine 43 are cytoplasmic. A helical transmembrane segment spans residues tyrosine 44–isoleucine 67. Over serine 68–cysteine 78 the chain is Extracellular. A disulfide bridge links cysteine 78 with cysteine 171. The helical transmembrane segment at leucine 79–valine 101 threads the bilayer. At aspartate 102–arginine 121 the chain is on the cytoplasmic side. Residues alanine 122–tryptophan 144 traverse the membrane as a helical segment. Residues asparagine 145–proline 178 are Extracellular-facing. Residues asparagine 153 and asparagine 163 are each glycosylated (N-linked (GlcNAc...) asparagine). Glutamate 174 is a binding site for adenosine. A helical membrane pass occupies residues methionine 179 to isoleucine 203. Residues lysine 204–serine 235 are Cytoplasmic-facing. The chain crosses the membrane as a helical span at residues leucine 236–phenylalanine 259. Adenosine is bound at residue asparagine 254. At histidine 260–lysine 267 the chain is on the extracellular side. A helical membrane pass occupies residues proline 268–alanine 291. The adenosine site is built by serine 279 and histidine 280. Residues tyrosine 292–leucine 332 are Cytoplasmic-facing. The S-palmitoyl cysteine moiety is linked to residue cysteine 311.

It belongs to the G-protein coupled receptor 1 family.

Its subcellular location is the cell membrane. Receptor for adenosine. The activity of this receptor is mediated by G proteins which activate adenylyl cyclase. The sequence is that of Adenosine receptor A2b (Adora2b) from Mus musculus (Mouse).